Reading from the N-terminus, the 693-residue chain is Polyphosphate kinase (693 aa).

An ATP-binding site is contributed by Asn57. Positions 383 and 413 each coordinate Mg(2+). His443 functions as the Phosphohistidine intermediate in the catalytic mechanism. ATP-binding residues include Tyr476, Arg572, and His601.

It belongs to the polyphosphate kinase 1 (PPK1) family. Mg(2+) serves as cofactor. An intermediate of this reaction is the autophosphorylated ppk in which a phosphate is covalently linked to a histidine residue through a N-P bond.

It catalyses the reaction [phosphate](n) + ATP = [phosphate](n+1) + ADP. Functionally, catalyzes the reversible transfer of the terminal phosphate of ATP to form a long-chain polyphosphate (polyP). This is Polyphosphate kinase from Acinetobacter baumannii (strain ATCC 17978 / DSM 105126 / CIP 53.77 / LMG 1025 / NCDC KC755 / 5377).